A 728-amino-acid polypeptide reads, in one-letter code: Putative ankyrin repeat protein L271 (728 aa).

ANK repeat units lie at residues 142-171 and 173-198; these read SDVNVIYWTSKQNYIDATKYLISIGANIKT and IYSASKFGNLDLIISIIDGKNKDIIL. The span at 244 to 267 shows a compositional bias: low complexity; the sequence is STKSTKSSGSPKSIKPKKSNQNNN. Positions 244–271 are disordered; sequence STKSTKSSGSPKSIKPKKSNQNNNAKIN. Residues 292–338 are a coiled coil; the sequence is TVDKMSSAKEQALNVYKEIENMENFILNKINITKKKALDKIKEIENI. ANK repeat units lie at residues 358–383, 384–414, 477–510, 514–543, 547–576, 594–626, 630–659, and 663–696; these read TNTDTITQAIISENLNSLDLLIRQGY, DINKILYLACINNKKNVIDYLIDNKGANYEQ, DDLSPIMVACRASKNDDQLDLVKMLVSYGFNINS, IGRSALHYAVNGSNRKIIEYLLALGADYSF, NGDTPMMLAKKSNNLELLDLFQSVPKDTKT, DIKTAMSICLSSINDNQFESVQKLIMSGFNVSS, TKKTLLHMAVVNNNLRIVELLINSGININS, and LGKTPLMLACQYSHRDSKLAIVEFLLNNNAKILI.

The polypeptide is Putative ankyrin repeat protein L271 (Acanthamoeba polyphaga (Amoeba)).